We begin with the raw amino-acid sequence, 248 residues long: tRNA (guanine-N(1)-)-methyltransferase (248 aa).

Residues G113 and 133–138 each bind S-adenosyl-L-methionine; that span reads IGDYVL.

This sequence belongs to the RNA methyltransferase TrmD family. Homodimer.

It is found in the cytoplasm. The enzyme catalyses guanosine(37) in tRNA + S-adenosyl-L-methionine = N(1)-methylguanosine(37) in tRNA + S-adenosyl-L-homocysteine + H(+). Specifically methylates guanosine-37 in various tRNAs. In Shewanella piezotolerans (strain WP3 / JCM 13877), this protein is tRNA (guanine-N(1)-)-methyltransferase.